Consider the following 144-residue polypeptide: Large ribosomal subunit protein uL13 (144 aa).

It belongs to the universal ribosomal protein uL13 family. As to quaternary structure, part of the 50S ribosomal subunit.

Its function is as follows. This protein is one of the early assembly proteins of the 50S ribosomal subunit, although it is not seen to bind rRNA by itself. It is important during the early stages of 50S assembly. This is Large ribosomal subunit protein uL13 from Mycoplasmopsis synoviae (strain 53) (Mycoplasma synoviae).